The chain runs to 414 residues: Lactosylceramide alpha-2,3-sialyltransferase (414 aa).

Residues 1–65 are Cytoplasmic-facing; the sequence is MHTEAVGGAA…MRRPSLLIKD (65 aa). The helical; Signal-anchor for type II membrane protein transmembrane segment at 66-86 threads the bilayer; that stretch reads ICKCTLVAFGVWLLYILILNY. Over 87 to 414 the chain is Lumenal; that stretch reads TAEECDMKRM…VVEDLSGGIH (328 aa). C194 and C352 are joined by a disulfide. N-linked (GlcNAc...) asparagine glycosylation is found at N235, N279, and N389.

Belongs to the glycosyltransferase 29 family. Mainly expressed in brain, and then testis, heart and liver, almost all tissues showed some levels of the gene expression.

The protein localises to the golgi apparatus membrane. It carries out the reaction a beta-D-Gal-(1-&gt;4)-beta-D-Glc-(1&lt;-&gt;1)-Cer(d18:1(4E)) + CMP-N-acetyl-beta-neuraminate = a ganglioside GM3 (d18:1(4E)) + CMP + H(+). The catalysed reaction is ganglioside GA2 (d18:1(4E)/18:0) + CMP-N-acetyl-beta-neuraminate = ganglioside GM2 (d18:1(4E)/18:0) + CMP + H(+). The enzyme catalyses a beta-D-Gal-(1&lt;-&gt;1')-ceramide + CMP-N-acetyl-beta-neuraminate = N-acetyl-alpha-neuraminosyl-(2-&gt;3)-beta-D-galactosyl-(1&lt;-&gt;1')-ceramide + CMP + H(+). It catalyses the reaction ganglioside GA1 (d18:1(4E)/18:0) + CMP-N-acetyl-beta-neuraminate = ganglioside GM1 (d18:1(4E)/18:0) + CMP + H(+). Functionally, (Microbial infection) Gangliosides GD1b and GT1b (derived from GM3) may serve as receptors for some C.botulinum neurotoxins (minimally types BoNT/A, B, C). Its function is as follows. Transfers the sialyl group (N-acetyl-alpha-neuraminyl or NeuAc) from CMP-NeuAc to the non-reducing terminal galactose (Gal) of glycosphingolipids forming gangliosides (important molecules involved in the regulation of multiple cellular processes, including cell proliferation and differentiation, apoptosis, embryogenesis, development, and oncogenesis). Mainly involved in the biosynthesis of ganglioside GM3 but can also use different glycolipids as substrate acceptors such as D-galactosylceramide (GalCer), asialo-GM2 (GA2) and asialo-GM1 (GA1), although less preferentially than beta-D-Gal-(1-&gt;4)-beta-D-Glc-(1&lt;-&gt;1)-Cer (LacCer). This chain is Lactosylceramide alpha-2,3-sialyltransferase (St3gal5), found in Mus musculus (Mouse).